A 326-amino-acid chain; its full sequence is 4-hydroxy-3-methylbut-2-enyl diphosphate reductase (326 aa).

Cys-22 is a binding site for [4Fe-4S] cluster. Positions 51 and 84 each coordinate (2E)-4-hydroxy-3-methylbut-2-enyl diphosphate. The dimethylallyl diphosphate site is built by His-51 and His-84. His-51 and His-84 together coordinate isopentenyl diphosphate. Cys-106 lines the [4Fe-4S] cluster pocket. His-134 is a binding site for (2E)-4-hydroxy-3-methylbut-2-enyl diphosphate. Residue His-134 coordinates dimethylallyl diphosphate. His-134 is an isopentenyl diphosphate binding site. Glu-136 acts as the Proton donor in catalysis. Thr-174 is a binding site for (2E)-4-hydroxy-3-methylbut-2-enyl diphosphate. Position 204 (Cys-204) interacts with [4Fe-4S] cluster. (2E)-4-hydroxy-3-methylbut-2-enyl diphosphate contacts are provided by Ser-232, Ser-233, Asn-234, and Ser-276. 4 residues coordinate dimethylallyl diphosphate: Ser-232, Ser-233, Asn-234, and Ser-276. Isopentenyl diphosphate contacts are provided by Ser-232, Ser-233, Asn-234, and Ser-276.

This sequence belongs to the IspH family. [4Fe-4S] cluster is required as a cofactor.

It catalyses the reaction isopentenyl diphosphate + 2 oxidized [2Fe-2S]-[ferredoxin] + H2O = (2E)-4-hydroxy-3-methylbut-2-enyl diphosphate + 2 reduced [2Fe-2S]-[ferredoxin] + 2 H(+). The catalysed reaction is dimethylallyl diphosphate + 2 oxidized [2Fe-2S]-[ferredoxin] + H2O = (2E)-4-hydroxy-3-methylbut-2-enyl diphosphate + 2 reduced [2Fe-2S]-[ferredoxin] + 2 H(+). It participates in isoprenoid biosynthesis; dimethylallyl diphosphate biosynthesis; dimethylallyl diphosphate from (2E)-4-hydroxy-3-methylbutenyl diphosphate: step 1/1. The protein operates within isoprenoid biosynthesis; isopentenyl diphosphate biosynthesis via DXP pathway; isopentenyl diphosphate from 1-deoxy-D-xylulose 5-phosphate: step 6/6. Catalyzes the conversion of 1-hydroxy-2-methyl-2-(E)-butenyl 4-diphosphate (HMBPP) into a mixture of isopentenyl diphosphate (IPP) and dimethylallyl diphosphate (DMAPP). Acts in the terminal step of the DOXP/MEP pathway for isoprenoid precursor biosynthesis. This chain is 4-hydroxy-3-methylbut-2-enyl diphosphate reductase, found in Bordetella bronchiseptica (strain ATCC BAA-588 / NCTC 13252 / RB50) (Alcaligenes bronchisepticus).